Consider the following 320-residue polypeptide: Cytochrome f (320 aa).

Residues 1–35 form the signal peptide; that stretch reads MQTRNTFSWIKEEITRSISVSLMIYIITGASISNA. The heme site is built by Y36, C56, C59, and H60. A helical transmembrane segment spans residues 286-306; the sequence is VQGLLFFLASIVFAQIFLVLK.

This sequence belongs to the cytochrome f family. In terms of assembly, the 4 large subunits of the cytochrome b6-f complex are cytochrome b6, subunit IV (17 kDa polypeptide, petD), cytochrome f and the Rieske protein, while the 4 small subunits are PetG, PetL, PetM and PetN. The complex functions as a dimer. Heme is required as a cofactor.

The protein localises to the plastid. It is found in the chloroplast thylakoid membrane. Component of the cytochrome b6-f complex, which mediates electron transfer between photosystem II (PSII) and photosystem I (PSI), cyclic electron flow around PSI, and state transitions. This chain is Cytochrome f, found in Gossypium hirsutum (Upland cotton).